Consider the following 505-residue polypeptide: ATP synthase subunit alpha (505 aa).

170 to 177 lines the ATP pocket; the sequence is GDRQTGKT.

Belongs to the ATPase alpha/beta chains family. In terms of assembly, F-type ATPases have 2 components, CF(1) - the catalytic core - and CF(0) - the membrane proton channel. CF(1) has five subunits: alpha(3), beta(3), gamma(1), delta(1), epsilon(1). CF(0) has four main subunits: a(1), b(1), b'(1) and c(9-12).

The protein resides in the cellular thylakoid membrane. It catalyses the reaction ATP + H2O + 4 H(+)(in) = ADP + phosphate + 5 H(+)(out). Functionally, produces ATP from ADP in the presence of a proton gradient across the membrane. The alpha chain is a regulatory subunit. The sequence is that of ATP synthase subunit alpha from Prochlorococcus marinus (strain MIT 9313).